We begin with the raw amino-acid sequence, 116 residues long: uncharacterized protein (116 aa).

A signal peptide spans 1–19 (MRWDVIILYAISRPYATRR). The interval 18 to 50 (RRTGSHTHPRDSRYIAANQRRPPSACRVGPSPA) is disordered.

This is an uncharacterized protein from Saccharomyces cerevisiae (strain ATCC 204508 / S288c) (Baker's yeast).